Consider the following 378-residue polypeptide: Erythronate-4-phosphate dehydrogenase (378 aa).

The substrate site is built by S45 and T66. Positions 146 and 175 each coordinate NAD(+). Residue R208 is part of the active site. D232 lines the NAD(+) pocket. The active site involves E237. H254 serves as the catalytic Proton donor. Residue G257 participates in NAD(+) binding. Y258 contacts substrate.

It belongs to the D-isomer specific 2-hydroxyacid dehydrogenase family. PdxB subfamily. In terms of assembly, homodimer.

Its subcellular location is the cytoplasm. The enzyme catalyses 4-phospho-D-erythronate + NAD(+) = (R)-3-hydroxy-2-oxo-4-phosphooxybutanoate + NADH + H(+). Its pathway is cofactor biosynthesis; pyridoxine 5'-phosphate biosynthesis; pyridoxine 5'-phosphate from D-erythrose 4-phosphate: step 2/5. Functionally, catalyzes the oxidation of erythronate-4-phosphate to 3-hydroxy-2-oxo-4-phosphonooxybutanoate. The sequence is that of Erythronate-4-phosphate dehydrogenase from Enterobacter sp. (strain 638).